We begin with the raw amino-acid sequence, 394 residues long: Guanine nucleotide-binding protein G(s) subunit alpha (394 aa).

The interval 1-23 (MGCLGNSKTEDQRNEEKAQREAN) is disordered. Gly2 carries the N-palmitoyl glycine lipid modification. Cys3 carries S-palmitoyl cysteine lipidation. A compositionally biased stretch (basic and acidic residues) spans 8–23 (KTEDQRNEEKAQREAN). The region spanning 39–394 (ATHRLLLLGA…RMHLRQYELL (356 aa)) is the G-alpha domain. The interval 42–55 (RLLLLGAGESGKST) is G1 motif. Residue 47–55 (GAGESGKST) coordinates GTP. Ser54 is a Mg(2+) binding site. The interval 68-90 (FNGEGGEEDPQAARSNSDGEKAT) is disordered. A G2 motif region spans residues 196–204 (DLLRCRVLT). GTP-binding positions include 197–204 (LLRCRVLT), 223–227 (DVGGQ), 292–295 (NKQD), and Ala366. Thr204 contacts Mg(2+). The tract at residues 219–228 (FHMFDVGGQR) is G3 motif. Residues 288-295 (ILFLNKQD) form a G4 motif region. Residues 364–369 (TCAVDT) are G5 motif.

This sequence belongs to the G-alpha family. G(s) subfamily. In terms of assembly, heterotrimeric G proteins are composed of 3 units; alpha, beta and gamma. The alpha chain contains the guanine nucleotide binding site. Interacts with CRY1; the interaction may block GPCR-mediated regulation of cAMP concentrations. Interacts with ADCY6 and stimulates its adenylyl cyclase activity. Interacts with ADCY2 and ADCY5. Stimulates the ADCY5 adenylyl cyclase activity. Interaction with SASH1.

Its subcellular location is the cell membrane. Functionally, guanine nucleotide-binding proteins (G proteins) function as transducers in numerous signaling pathways controlled by G protein-coupled receptors (GPCRs). Signaling involves the activation of adenylyl cyclases, resulting in increased levels of the signaling molecule cAMP. GNAS functions downstream of several GPCRs, including beta-adrenergic receptors. Stimulates the Ras signaling pathway via RAPGEF2. This is Guanine nucleotide-binding protein G(s) subunit alpha (GNAS) from Cricetulus griseus (Chinese hamster).